The sequence spans 380 residues: Cytochrome b (380 aa).

A run of 4 helical transmembrane segments spans residues 34 to 54 (FGSLLGICLATQILTGLLLAA), 78 to 99 (WLIRNLHANGASFFFICIYLHI), 114 to 134 (WNTGIILLLTLMATAFVGYVL), and 179 to 199 (FFTLHFLLPFMIAGLTLIHLT). Residues His84 and His98 each coordinate heme b. 2 residues coordinate heme b: His183 and His197. His202 contributes to the a ubiquinone binding site. Transmembrane regions (helical) follow at residues 227–247 (TKDILGFILLLLPLTALALFS), 289–309 (LGGVLALAASVLILFLIPLLH), 321–341 (LSQLLFWTLVANLTILTWIGS), and 348–368 (FIIIGQLASLTYFTILLILFP).

It belongs to the cytochrome b family. In terms of assembly, the cytochrome bc1 complex contains 11 subunits: 3 respiratory subunits (MT-CYB, CYC1 and UQCRFS1), 2 core proteins (UQCRC1 and UQCRC2) and 6 low-molecular weight proteins (UQCRH/QCR6, UQCRB/QCR7, UQCRQ/QCR8, UQCR10/QCR9, UQCR11/QCR10 and a cleavage product of UQCRFS1). This cytochrome bc1 complex then forms a dimer. Heme b is required as a cofactor.

It localises to the mitochondrion inner membrane. Functionally, component of the ubiquinol-cytochrome c reductase complex (complex III or cytochrome b-c1 complex) that is part of the mitochondrial respiratory chain. The b-c1 complex mediates electron transfer from ubiquinol to cytochrome c. Contributes to the generation of a proton gradient across the mitochondrial membrane that is then used for ATP synthesis. The polypeptide is Cytochrome b (MT-CYB) (Eudyptes chrysolophus (Macaroni penguin)).